Reading from the N-terminus, the 320-residue chain is tRNA N6-adenosine threonylcarbamoyltransferase (320 aa).

Fe cation contacts are provided by His-113 and His-117. Substrate-binding positions include 143 to 147, Asp-176, Gly-189, Asp-193, and Asn-281; that span reads VVSGG. Asp-305 contacts Fe cation.

Belongs to the KAE1 / TsaD family. Requires Fe(2+) as cofactor.

The protein localises to the cytoplasm. The enzyme catalyses L-threonylcarbamoyladenylate + adenosine(37) in tRNA = N(6)-L-threonylcarbamoyladenosine(37) in tRNA + AMP + H(+). Its function is as follows. Required for the formation of a threonylcarbamoyl group on adenosine at position 37 (t(6)A37) in tRNAs that read codons beginning with adenine. Is involved in the transfer of the threonylcarbamoyl moiety of threonylcarbamoyl-AMP (TC-AMP) to the N6 group of A37, together with TsaE and TsaB. TsaD likely plays a direct catalytic role in this reaction. This Mycoplasmoides gallisepticum (strain R(low / passage 15 / clone 2)) (Mycoplasma gallisepticum) protein is tRNA N6-adenosine threonylcarbamoyltransferase.